A 551-amino-acid chain; its full sequence is Arginine--tRNA ligase (551 aa).

The 'HIGH' region signature appears at 123 to 133 (ANPTGPLTIGR).

The protein belongs to the class-I aminoacyl-tRNA synthetase family. As to quaternary structure, monomer.

Its subcellular location is the cytoplasm. It carries out the reaction tRNA(Arg) + L-arginine + ATP = L-arginyl-tRNA(Arg) + AMP + diphosphate. In Prosthecochloris aestuarii (strain DSM 271 / SK 413), this protein is Arginine--tRNA ligase.